Here is a 37-residue protein sequence, read N- to C-terminus: uncharacterized protein (37 aa).

The chain crosses the membrane as a helical span at residues 1-21 (MQDLEIFLSIFAFIFVFYFGA).

Its subcellular location is the endoplasmic reticulum membrane. This is an uncharacterized protein from Saccharomyces cerevisiae (strain ATCC 204508 / S288c) (Baker's yeast).